The following is a 2147-amino-acid chain: Probable serine/threonine-protein kinase roco6 (2147 aa).

Residues 1–1055 (MNSIHKQHYT…LDHSRVEFNR (1055 aa)) lie on the Extracellular side of the membrane. LRR repeat units lie at residues 69-89 (DMKY…MMIP), 101-122 (SISI…LKQL), 124-145 (QLIS…FPEE), 148-169 (LLRK…FNKF), 171-192 (ILED…LFPE), 193-214 (GIMR…PWFE), 215-236 (SLLT…PFHL), 237-256 (VRVS…VILR), 306-328 (HLTH…ANLT), 329-350 (ELVR…IVSY), and 352-372 (RLEH…PRRI). Residues 390–750 (QGEPSYRVKL…DLLKKTVVEL (361 aa)) form the Roc domain. Residues 390–750 (QGEPSYRVKL…DLLKKTVVEL (361 aa)) are small GTPase-like. 403–410 (GQENVGKT) contacts GTP. Disordered regions lie at residues 491–582 (NSNG…VGTN) and 602–621 (SNLS…GGSG). Composition is skewed to low complexity over residues 492–512 (SNGV…NIHS), 519–531 (NVNS…SNNS), 539–568 (NSFL…NVNS), and 602–617 (SNLS…NNNS). GTP-binding positions include 634–638 (DCAGQ) and 691–694 (THLD). The COR domain occupies 758–892 (PELYLKLEKL…RFELMFPLDS (135 aa)). Composition is skewed to low complexity over residues 905-941 (GNSY…SPST) and 960-977 (SGNN…RSIS). Residues 905–995 (GNSYVNNNNN…NSDLDLIGGG (91 aa)) are disordered. Residues 1051 to 1098 (VEFNRWIQLSFAPAGLFSRLLIRLLISKEFDMKPILYWRNGVVVESQS) form a WD 1 repeat. Residues 1056–1076 (WIQLSFAPAGLFSRLLIRLLI) form a helical membrane-spanning segment. At 1077–2147 (SKEFDMKPIL…CGTNNVCIWS (1071 aa)) the chain is on the cytoplasmic side. 3 LRR repeats span residues 1237–1263 (ILSI…PPPP), 1274–1297 (DDNI…GSQP), and 1325–1348 (ESSL…TYKY). Residues 1356 to 1627 (FESPKLIGRG…KIVKRIKQII (272 aa)) enclose the Protein kinase domain. Residues 1362–1370 (IGRGASGKI) and Lys-1383 each bind ATP. The active-site Proton acceptor is Asp-1481. The disordered stretch occupies residues 1653-1699 (ADSQPFHYHQQQQPSLNSTNQLQQQQYSSVLTSPRSNLSDSSNSSQN). A compositionally biased stretch (low complexity) spans 1662–1699 (QQQQPSLNSTNQLQQQQYSSVLTSPRSNLSDSSNSSQN). WD repeat units lie at residues 1735 to 1774 (QPEA…QIFR) and 1778 to 1820 (LHPG…LDDQ). The region spanning 1821 to 1923 (SGTKSDFITK…WLTAINRVIN (103 aa)) is the PH domain. A WD 4 repeat occupies 2031–2068 (HYSKPITSMALVEKNVWISCEDESLSVWDGDTGSFIRK).

This sequence belongs to the protein kinase superfamily. TKL Ser/Thr protein kinase family. ROCO subfamily.

It is found in the membrane. The catalysed reaction is L-seryl-[protein] + ATP = O-phospho-L-seryl-[protein] + ADP + H(+). It catalyses the reaction L-threonyl-[protein] + ATP = O-phospho-L-threonyl-[protein] + ADP + H(+). May act as a serine/threonine-protein kinase and guanine-nucleotide releasing factor. The polypeptide is Probable serine/threonine-protein kinase roco6 (roco6) (Dictyostelium discoideum (Social amoeba)).